We begin with the raw amino-acid sequence, 455 residues long: MKNSERFSAAKPLMEQGGKSSRKPGFMSEDRISELPEVLLLQILSSLPTKLVISTSVLSKRWLSLWKMVQRLEFESSRNIYDFAENVTRSLLSHKAPVLESLHLKVGDQFDGVYVGVWATIAFTRHVREFVLDLSSYHGPRVRFPTSLFCFDTLETLKLDYVYIYVPCPVSMKSLRTLHLLSVVYKGDESGHNLFASCPNLEHLVLRRGFFFDAVVNFIIDAPSLKTLLLSDPFSARESSRGYVIKAPSLKYLGIESVEGFEYFLIENVTELVEANIRNVSKIVNENILGSLKSAKRLSLDLSPLKITYPTEVMYHQLVYLEMHTHKVEWWNLLTHMLDSSPKLQVLKLIDRETRHENLEFDKKYKDQGKWNQPKYVPECLETFMWRNCNWGREEEKEVATYILRNARQLKKATFSTDPIEAKRLCKLAKRRKMREELDGVVMTSNSCHLVFEFE.

The segment at 1–26 is disordered; the sequence is MKNSERFSAAKPLMEQGGKSSRKPGF. The region spanning 29 to 75 is the F-box domain; that stretch reads EDRISELPEVLLLQILSSLPTKLVISTSVLSKRWLSLWKMVQRLEFE. 6 LRR repeats span residues 80–106, 155–182, 183–208, 227–257, 277–302, and 325–351; these read IYDF…HLKV, ETLK…HLLS, VVYK…VLRR, TLLL…GIES, IRNV…SLDL, and THKV…KLID. The FBD domain maps to 370–417; it reads KWNQPKYVPECLETFMWRNCNWGREEEKEVATYILRNARQLKKATFST.

This chain is F-box/FBD/LRR-repeat protein At3g51530, found in Arabidopsis thaliana (Mouse-ear cress).